The sequence spans 281 residues: MKRVGAHVSIAGGVENAPLNAQKIGAKAFAMFTRNQRQWHSAPLTAASIEAFRRNCDEAGFLPEHILPHDSYLINLGAPEADKIEKSRKAFVTEMQRAEALGLTMLNFHPGSHLNLTDEDACLKTIAESVNRSLDATAGVTAVIENTAGQGSNLGWRFEHLARIIELVEDKSRVGVCLDTCHLFASGYDLRTPEAFDATLREFDRVVGLLYLKGMHLNDAKQKLGSKVDRHECLGKGMIGIDAFAHIMRHPALEEIPLILETPNAEGWAEEIAMLYGFTNE.

Zn(2+) contacts are provided by His-69, His-109, Glu-145, Asp-179, His-182, His-216, Asp-229, His-231, and Glu-261.

Belongs to the AP endonuclease 2 family. The cofactor is Zn(2+).

It catalyses the reaction Endonucleolytic cleavage to 5'-phosphooligonucleotide end-products.. Functionally, endonuclease IV plays a role in DNA repair. It cleaves phosphodiester bonds at apurinic or apyrimidinic (AP) sites, generating a 3'-hydroxyl group and a 5'-terminal sugar phosphate. This Chlorobaculum tepidum (strain ATCC 49652 / DSM 12025 / NBRC 103806 / TLS) (Chlorobium tepidum) protein is Probable endonuclease 4.